We begin with the raw amino-acid sequence, 43 residues long: Protein PsbN (43 aa).

Residues 4–24 (ATIIVIFVSSLLLGITAYSIY) form a helical membrane-spanning segment.

The protein belongs to the PsbN family.

It is found in the plastid. Its subcellular location is the chloroplast thylakoid membrane. Its function is as follows. May play a role in photosystem I and II biogenesis. In Trieres chinensis (Marine centric diatom), this protein is Protein PsbN.